Here is an 85-residue protein sequence, read N- to C-terminus: Large ribosomal subunit protein bL31B (85 aa).

It belongs to the bacterial ribosomal protein bL31 family. Type B subfamily. As to quaternary structure, part of the 50S ribosomal subunit.

The protein is Large ribosomal subunit protein bL31B of Staphylococcus haemolyticus (strain JCSC1435).